A 252-amino-acid chain; its full sequence is 3-dehydroquinate dehydratase (252 aa).

3-dehydroquinate contacts are provided by residues S21, 46–48, and R82; that span reads EWR. H143 serves as the catalytic Proton donor/acceptor. K170 functions as the Schiff-base intermediate with substrate in the catalytic mechanism. Positions 213, 232, and 236 each coordinate 3-dehydroquinate.

Belongs to the type-I 3-dehydroquinase family. In terms of assembly, homodimer.

The enzyme catalyses 3-dehydroquinate = 3-dehydroshikimate + H2O. It functions in the pathway metabolic intermediate biosynthesis; chorismate biosynthesis; chorismate from D-erythrose 4-phosphate and phosphoenolpyruvate: step 3/7. Functionally, involved in the third step of the chorismate pathway, which leads to the biosynthesis of aromatic amino acids. Catalyzes the cis-dehydration of 3-dehydroquinate (DHQ) and introduces the first double bond of the aromatic ring to yield 3-dehydroshikimate. This is 3-dehydroquinate dehydratase from Salmonella agona (strain SL483).